A 2208-amino-acid polypeptide reads, in one-letter code: RNA-directed RNA polymerase L (2208 aa).

An endonuclease region spans residues 26–284 (KEALLSQVEV…SHAGTTVPEC (259 aa)). Mn(2+)-binding residues include Glu51, Asp89, and Glu102. The active site involves Lys115. Positions 1172–1370 (CDMKMAVNNG…FLSSKLNKFV (199 aa)) constitute a RdRp catalytic domain. Asp1330 serves as a coordination point for Mg(2+).

It belongs to the Bunyavirales RNA polymerase family. As to quaternary structure, homomultimer; the oligomeric structure is essential for the polymerase activity. Interacts with nucleoprotein N. Interacts with protein Z; this interaction inhibits viral transcription and replication, Z partially blocks the product exit tunnel for the releasing nascent RNA product. Requires Mn(2+) as cofactor. The cofactor is Mg(2+).

The protein resides in the virion. It is found in the host cytoplasm. The catalysed reaction is RNA(n) + a ribonucleoside 5'-triphosphate = RNA(n+1) + diphosphate. In terms of biological role, RNA-dependent RNA polymerase, which is responsible for the replication and transcription of the viral RNA genome using antigenomic RNA as an intermediate. During transcription, synthesizes subgenomic RNAs and assures their capping by a cap-snatching mechanism, which involves the endonuclease activity cleaving the host capped pre-mRNAs. These short capped RNAs are then used as primers for viral transcription. The 3'-end of subgenomic mRNAs molecules are heterogeneous and not polyadenylated. The replicase function is to direct synthesis of antigenomic and genomic RNA which are encapsidated and non capped. As a consequence of the use of the same enzyme for both transcription and replication, these mechanisms need to be well coordinated. These processes may be regulated by proteins N and Z in a dose-dependent manner. Z protein inhibits the viral polymerase L und thus the viral transcription and RNA synthesis. The sequence is that of RNA-directed RNA polymerase L from Hylaeamys megacephalus (Large-headed rice rat).